Reading from the N-terminus, the 653-residue chain is DNA mismatch repair protein MutL (653 aa).

The tract at residues 368–413 is disordered; it reads EVSQVAEPEGKTDITNKKETETKEKAEKKENKQEEKEEKTSAPEYV. The segment covering 375–408 has biased composition (basic and acidic residues); sequence PEGKTDITNKKETETKEKAEKKENKQEEKEEKTS.

Belongs to the DNA mismatch repair MutL/HexB family.

This protein is involved in the repair of mismatches in DNA. It is required for dam-dependent methyl-directed DNA mismatch repair. May act as a 'molecular matchmaker', a protein that promotes the formation of a stable complex between two or more DNA-binding proteins in an ATP-dependent manner without itself being part of a final effector complex. This is DNA mismatch repair protein MutL from Lactobacillus delbrueckii subsp. bulgaricus (strain ATCC 11842 / DSM 20081 / BCRC 10696 / JCM 1002 / NBRC 13953 / NCIMB 11778 / NCTC 12712 / WDCM 00102 / Lb 14).